We begin with the raw amino-acid sequence, 508 residues long: p-aminobenzoyl-glutamate transport protein (508 aa).

The next 13 membrane-spanning stretches (helical) occupy residues 30–50 (FLLF…LSAF), 85–105 (FSGF…GLAE), 121–139 (VNAR…FSHI), 140–159 (SSDA…FLAV), 164–184 (VAGL…NLLI), 211–231 (IDNW…GGLI), 261–281 (GLRI…LMVI), 303–323 (GIVP…GIAT), 343–363 (MAGF…FNWS), 382–402 (LSGI…CMFI), 405–425 (GSAI…LLGF), 439–459 (SSVL…GFLQ), and 479–499 (LIFL…GLPI).

Its subcellular location is the cell inner membrane. It carries out the reaction N-(4-aminobenzoyl)-L-glutamate(in) + H(+)(in) = N-(4-aminobenzoyl)-L-glutamate(out) + H(+)(out). Completely inhibited by 100 nM sodium azide and by the proton ionophore carbonyl cyanide m-chlorophenylhydrazone (CCCP). Is also strongly inhibited by 100 mM potassium fluoride. Functionally, essential for aminobenzoyl-glutamate utilization. It catalyzes the concentration-dependent uptake of p-aminobenzoyl-glutamate (PABA-GLU) into the cell and allows accumulation of PABA-GLU to a concentration enabling AbgAB to catalyze cleavage into p-aminobenzoate and glutamate. It also seems to increase the sensitivity to low levels of aminobenzoyl-glutamate. May actually serve physiologically as a transporter for some other molecule, perhaps a dipeptide, and that it transports p-aminobenzoyl-glutamate as a secondary activity. The physiological role of abgABT should be clarified. The polypeptide is p-aminobenzoyl-glutamate transport protein (Escherichia coli (strain K12)).